The primary structure comprises 399 residues: Protein TWIN LOV 1 (399 aa).

The 72-residue stretch at 26–97 (LWIKEALEEL…MEIREAIREE (72 aa)) folds into the PAS 1 domain. Positions 98–153 (RSVQVSLLNYRKSGSPFWMLFHMCPVFGKDDGKVTNFVAVQVPISGREHHRKKLRN) constitute a PAC 1 domain. The 72-residue stretch at 249 to 320 (SLVISLGRIK…EMKECILKGQ (72 aa)) folds into the PAS 2 domain. S-4a-FMN cysteine is present on Cys-296. Residues 320-376 (QSCTVQILNYSNRKDKSSFWNLLHISPVRNASGKTAYFVGVQVEASCRNTEIKELRP) enclose the PAC 2 domain.

As to quaternary structure, interacts with VTC2, VTC5 and BLH10. FMN binds covalently to cysteine after exposure to blue light and is reversed in the dark.

The sequence is that of Protein TWIN LOV 1 (TLP1) from Arabidopsis thaliana (Mouse-ear cress).